Consider the following 289-residue polypeptide: MASDLAMSAELPNSPLAIEYVNDFDLMKFEVKKEPPEAERFCHRLPPGSLSSTPISTPCSSVPSSPSFCAPSPGAQSGVNPSNPNAANKPQLEDLYWMSNYQHHINPEALNLTPEDAVEALIGNPHHHHHHHQGYDGFRGQQYPGDEMAPSGHHHQVHHHHHHHNHHLRLEDRFSDEQLVSMSVRELNRQLRGFSKEEVIRLKQKRRTLKNRGYAQSCRYKRVQQRHILETEKCQLQSQVEQLKQEVSRLAKERDLYKDKYEKLASRSFTTRESPPQGNPGKANADFFM.

The segment covering 52-73 (STPISTPCSSVPSSPSFCAPSP) has biased composition (low complexity). Disordered stretches follow at residues 52–87 (STPISTPCSSVPSSPSFCAPSPGAQSGVNPSNPNAA) and 126–164 (HHHHHHHQGYDGFRGQQYPGDEMAPSGHHHQVHHHHHHH). Over residues 74 to 87 (GAQSGVNPSNPNAA) the composition is skewed to polar residues. Positions 152–164 (GHHHQVHHHHHHH) are enriched in basic residues. The interval 201-226 (RLKQKRRTLKNRGYAQSCRYKRVQQR) is basic motif. The region spanning 201 to 264 (RLKQKRRTLK…DLYKDKYEKL (64 aa)) is the bZIP domain. Residues 229 to 250 (LETEKCQLQSQVEQLKQEVSRL) are leucine-zipper. The segment at 266–289 (SRSFTTRESPPQGNPGKANADFFM) is disordered. Positions 267–276 (RSFTTRESPP) are enriched in polar residues.

Belongs to the bZIP family. Maf subfamily.

The protein localises to the nucleus. Transcription factor, possibly involved in transcription regulation during lens development. This Xenopus tropicalis (Western clawed frog) protein is Transcription factor MafA (mafa).